Reading from the N-terminus, the 266-residue chain is Thymidylate synthase (266 aa).

Position 24 (R24) interacts with dUMP. H54 contributes to the (6R)-5,10-methylene-5,6,7,8-tetrahydrofolate binding site. 129-130 contacts dUMP; it reads RR. Residue C149 is the Nucleophile of the active site. DUMP-binding positions include 169–172, N180, and 210–212; these read RSAD and HIY. D172 is a binding site for (6R)-5,10-methylene-5,6,7,8-tetrahydrofolate. Position 265 (A265) interacts with (6R)-5,10-methylene-5,6,7,8-tetrahydrofolate.

It belongs to the thymidylate synthase family. Bacterial-type ThyA subfamily. In terms of assembly, homodimer.

The protein localises to the cytoplasm. It carries out the reaction dUMP + (6R)-5,10-methylene-5,6,7,8-tetrahydrofolate = 7,8-dihydrofolate + dTMP. The protein operates within pyrimidine metabolism; dTTP biosynthesis. Functionally, catalyzes the reductive methylation of 2'-deoxyuridine-5'-monophosphate (dUMP) to 2'-deoxythymidine-5'-monophosphate (dTMP) while utilizing 5,10-methylenetetrahydrofolate (mTHF) as the methyl donor and reductant in the reaction, yielding dihydrofolate (DHF) as a by-product. This enzymatic reaction provides an intracellular de novo source of dTMP, an essential precursor for DNA biosynthesis. The protein is Thymidylate synthase of Mycolicibacterium paratuberculosis (strain ATCC BAA-968 / K-10) (Mycobacterium paratuberculosis).